The chain runs to 155 residues: Secreted RxLR effector protein 38 (155 aa).

A signal peptide spans 1 to 17 (MHLIYIVMAATATTLHA). The RxLR-dEER motif lies at 49–64 (RFLRGAYEDVHREEER).

Belongs to the RxLR effector family.

The protein resides in the secreted. Its subcellular location is the host nucleus. It localises to the host cytoplasm. In terms of biological role, secreted effector that completely suppresses the host cell death induced by cell death-inducing proteins. This chain is Secreted RxLR effector protein 38, found in Plasmopara viticola (Downy mildew of grapevine).